Consider the following 207-residue polypeptide: LexA repressor (207 aa).

Residues 28-48 (VREIGEAVGLASSSTVHGHLA) constitute a DNA-binding region (H-T-H motif). Residues serine 129 and lysine 167 each act as for autocatalytic cleavage activity in the active site.

This sequence belongs to the peptidase S24 family. Homodimer.

The enzyme catalyses Hydrolysis of Ala-|-Gly bond in repressor LexA.. Its function is as follows. Represses a number of genes involved in the response to DNA damage (SOS response), including recA and lexA. In the presence of single-stranded DNA, RecA interacts with LexA causing an autocatalytic cleavage which disrupts the DNA-binding part of LexA, leading to derepression of the SOS regulon and eventually DNA repair. The sequence is that of LexA repressor from Geobacillus thermodenitrificans (strain NG80-2).